Reading from the N-terminus, the 296-residue chain is Diguanylate cyclase DgcS (296 aa).

The region spanning 165–293 (GSVSLIVLDL…GRNCYKLSPT (129 aa)) is the GGDEF domain. Mg(2+)-binding residues include aspartate 173, leucine 174, and aspartate 216. The active site involves aspartate 216.

The cofactor is Mg(2+).

It carries out the reaction 2 GTP = 3',3'-c-di-GMP + 2 diphosphate. In terms of biological role, catalyzes the synthesis of cyclic-di-GMP (c-di-GMP) via the condensation of 2 GTP molecules. May be involved in the regulation of formation of solid surface-associated biofilms and pellicles according to environmental conditions. The protein is Diguanylate cyclase DgcS of Shewanella oneidensis (strain ATCC 700550 / JCM 31522 / CIP 106686 / LMG 19005 / NCIMB 14063 / MR-1).